The primary structure comprises 150 residues: Large ribosomal subunit protein bL9 (150 aa).

The protein belongs to the bacterial ribosomal protein bL9 family.

Functionally, binds to the 23S rRNA. The chain is Large ribosomal subunit protein bL9 from Renibacterium salmoninarum (strain ATCC 33209 / DSM 20767 / JCM 11484 / NBRC 15589 / NCIMB 2235).